The primary structure comprises 315 residues: Isoaspartyl peptidase/L-asparaginase 1 (315 aa).

The residue at position 169 (S169) is a Phosphoserine. T183 (nucleophile) is an active-site residue. Residues 211-214 and 233-236 each bind substrate; these read RIGD and TGKG.

It belongs to the Ntn-hydrolase family. Heterotetramer of two alpha and two beta chains arranged as a dimer of alpha/beta heterodimers. Post-translationally, cleaved into an alpha and beta chain by autocatalysis; this activates the enzyme. The N-terminal residue of the beta subunit is responsible for the nucleophile hydrolase activity.

The enzyme catalyses Cleavage of a beta-linked Asp residue from the N-terminus of a polypeptide.. Its function is as follows. Acts in asparagine catabolism but also in the final steps of protein and degradation via hydrolysis of a range of isoaspartyl dipeptides. The affinity for Asn and at least 4 isoaspartyl dipeptides (L-beta-Asp-Ala, L-beta-Asp-Gly, L-beta-Asp-Leu, L-beta-Asp-Phe) is quite low, KM being greater than 4.0 mM. The enzyme is inactive on alpha-aspartyl dipeptides. This Arabidopsis thaliana (Mouse-ear cress) protein is Isoaspartyl peptidase/L-asparaginase 1.